Here is a 438-residue protein sequence, read N- to C-terminus: Trigger factor (438 aa).

A PPIase FKBP-type domain is found at 160–245; it reads DDKVTIDFVG…VKKIQQAELP (86 aa).

This sequence belongs to the FKBP-type PPIase family. Tig subfamily.

The protein resides in the cytoplasm. The enzyme catalyses [protein]-peptidylproline (omega=180) = [protein]-peptidylproline (omega=0). Involved in protein export. Acts as a chaperone by maintaining the newly synthesized protein in an open conformation. Functions as a peptidyl-prolyl cis-trans isomerase. The protein is Trigger factor of Francisella tularensis subsp. novicida (strain U112).